The chain runs to 404 residues: Glucose-1-phosphate adenylyltransferase (404 aa).

Alpha-D-glucose 1-phosphate-binding positions include Tyr99, Gly164, 179–180 (EK), and Ser197.

Belongs to the bacterial/plant glucose-1-phosphate adenylyltransferase family.

The enzyme catalyses alpha-D-glucose 1-phosphate + ATP + H(+) = ADP-alpha-D-glucose + diphosphate. The protein operates within capsule biogenesis; capsule polysaccharide biosynthesis. Its pathway is glycan biosynthesis; glycogen biosynthesis. Involved in the biosynthesis of ADP-glucose, a building block, required in the biosynthesis of maltose-1-phosphate (M1P) and in the elongation reactions to produce linear alpha-1,4-glucans. Catalyzes the reaction between ATP and alpha-D-glucose 1-phosphate (G1P) to produce pyrophosphate and ADP-Glc. This Mycobacterium marinum (strain ATCC BAA-535 / M) protein is Glucose-1-phosphate adenylyltransferase.